The sequence spans 85 residues: MKQGIHPEYHKVIFLDTTTNFKFLSGSTKTSSETMEWEDGNEYPVIRLDVSSDSHPFYTGRQKFAAADGRVERFNKKFGLKSNNN.

This sequence belongs to the bacterial ribosomal protein bL31 family. Type B subfamily. In terms of assembly, part of the 50S ribosomal subunit.

The protein is Large ribosomal subunit protein bL31B of Staphylococcus epidermidis (strain ATCC 35984 / DSM 28319 / BCRC 17069 / CCUG 31568 / BM 3577 / RP62A).